A 262-amino-acid chain; its full sequence is Trypsin eta (262 aa).

Positions 1–22 (MNKVILRILAVLFLLGIYAVSA) are cleaved as a signal peptide. The propeptide at 23-27 (QSDGR) is activation peptide. The 232-residue stretch at 28–259 (IVGGADTSSY…YKDWIAKQRT (232 aa)) folds into the Peptidase S1 domain. A disulfide bond links C59 and C75. Active-site charge relay system residues include H74 and D120. 2 disulfides stabilise this stretch: C185–C200 and C211–C235. Residue S215 is the Charge relay system of the active site.

It belongs to the peptidase S1 family.

The protein resides in the secreted. Its subcellular location is the extracellular space. The enzyme catalyses Preferential cleavage: Arg-|-Xaa, Lys-|-Xaa.. The chain is Trypsin eta (etaTry) from Drosophila melanogaster (Fruit fly).